The primary structure comprises 172 residues: Co-chaperone protein HscB (172 aa).

Residues 2-74 enclose the J domain; the sequence is DYFTLFGLPI…LKRAEYMLSL (73 aa).

This sequence belongs to the HscB family. As to quaternary structure, interacts with HscA and stimulates its ATPase activity. Interacts with IscU.

Its function is as follows. Co-chaperone involved in the maturation of iron-sulfur cluster-containing proteins. Seems to help targeting proteins to be folded toward HscA. In Pectobacterium atrosepticum (strain SCRI 1043 / ATCC BAA-672) (Erwinia carotovora subsp. atroseptica), this protein is Co-chaperone protein HscB.